Consider the following 336-residue polypeptide: Glyceraldehyde-3-phosphate dehydrogenase (336 aa).

NAD(+) is bound by residues 12-13, aspartate 34, and arginine 79; that span reads RI. D-glyceraldehyde 3-phosphate-binding positions include 150–152, threonine 181, 210–211, and arginine 233; these read SCT and TG. Cysteine 151 functions as the Nucleophile in the catalytic mechanism. An NAD(+)-binding site is contributed by asparagine 315.

Belongs to the glyceraldehyde-3-phosphate dehydrogenase family. Homotetramer.

It localises to the cytoplasm. It carries out the reaction D-glyceraldehyde 3-phosphate + phosphate + NAD(+) = (2R)-3-phospho-glyceroyl phosphate + NADH + H(+). It participates in carbohydrate degradation; glycolysis; pyruvate from D-glyceraldehyde 3-phosphate: step 1/5. Its function is as follows. Involved in osmoadaptation. This is Glyceraldehyde-3-phosphate dehydrogenase (gpdA) from Emericella nidulans (strain FGSC A4 / ATCC 38163 / CBS 112.46 / NRRL 194 / M139) (Aspergillus nidulans).